Consider the following 244-residue polypeptide: Transcriptional activator protein PhzR (244 aa).

The HTH luxR-type domain maps to 177–242; it reads AFNTDVEFSE…QAVSYAVALG (66 aa). The segment at residues 201–220 is a DNA-binding region (H-T-H motif); that stretch reads SEEIGVIMGVCTDTVNYHHR.

Belongs to the autoinducer-regulated transcriptional regulatory protein family.

In terms of biological role, positive regulator of phenazine antibiotic production. May activate the phenazine biosynthetic genes by binding to a DNA sequence upstream of them, or to an intermediate gene which, in turn, interacts with them. This is Transcriptional activator protein PhzR (phzR) from Pseudomonas fluorescens.